The chain runs to 240 residues: Izumo sperm-egg fusion protein 3 (240 aa).

The N-terminal stretch at 1-22 is a signal peptide; the sequence is MGDLWLLLLLPLSLAAFHGVKG. At 23–176 the chain is on the extracellular side; that stretch reads CLECDPKFIE…DDPKKAESRE (154 aa). Residues 177–197 form a helical membrane-spanning segment; the sequence is IGLFLILLAEGVILGGVLLLF. The Cytoplasmic portion of the chain corresponds to 198–240; it reads HFCISHQRKMKAIRRSLKTYLEKKLEELMGIKDEKEKDFRGRE.

This sequence belongs to the Izumo family. Monomer and homodimer.

The protein localises to the cell membrane. This is Izumo sperm-egg fusion protein 3 (IZUMO3) from Bos taurus (Bovine).